An 867-amino-acid chain; its full sequence is Protein melted homolog (867 aa).

Positions 480–505 (MPSSSRTNVHLSQAASSSRGHSLPQT) are disordered. The 108-residue stretch at 753–860 (EKVLEGQLKE…WLHCLQIAMA (108 aa)) folds into the PH domain.

It belongs to the MELT/VEPH family.

The protein localises to the cell membrane. The sequence is that of Protein melted homolog from Caenorhabditis briggsae.